Consider the following 609-residue polypeptide: Myoneurin (609 aa).

Residues 24–89 (CDCTILIGDF…IYSGNLNYDS (66 aa)) enclose the BTB domain. 2 consecutive short sequence motifs (nuclear localization signal) follow at residues 172–188 (KKSQ…RSHQ) and 257–262 (QKPAKL). C2H2-type zinc fingers lie at residues 301–323 (PVCN…MRIH), 329–351 (YVCH…VRTH), 357–380 (YQCK…RMHH), 386–408 (YKCD…ARKH), 414–436 (YVCD…VRRH), 442–464 (YVCD…ARKH), 470–492 (YICG…FRSH), and 498–521 (FVCE…LKMH). The segment at 528–553 (IEMKSAENSSSSEDSTTKSPEPESLE) is disordered. A compositionally biased stretch (low complexity) spans 533-546 (AENSSSSEDSTTKS).

The protein localises to the nucleus. In Xenopus laevis (African clawed frog), this protein is Myoneurin (mynn).